The sequence spans 1941 residues: Integrin beta-like protein B (1941 aa).

An N-terminal signal peptide occupies residues 1-20 (MKNIIKYLFIFLCFLIITEA). At 21–1871 (THFRYGTISW…VTTQNSSNKT (1851 aa)) the chain is on the extracellular side. The 38-residue stretch at 420-457 (YGDKCTVLPPCKNGVPNGGVNGDGKCLCNNGWTGSDCS) folds into the EGF-like domain. Disulfide bonds link Cys430–Cys445 and Cys447–Cys456. Residues 513–696 (DVYLLVDANM…AGIKAVSSKL (184 aa)) form the VWFA domain. N-linked (GlcNAc...) asparagine glycosylation is found at Asn1400, Asn1505, Asn1530, Asn1606, Asn1652, Asn1738, Asn1777, Asn1848, Asn1866, and Asn1869. A helical transmembrane segment spans residues 1872-1892 (VLSGAIAGAAAGTALIAAAMW). Residues 1893–1941 (KMLRKAAPPTDAFFDEGAFLGDGVNSNPMYQESKNGGENPLYLASNETL) lie on the Cytoplasmic side of the membrane. Residues 1921–1941 (MYQESKNGGENPLYLASNETL) are disordered.

This sequence belongs to the SIB family. Interacts with talA/talin.

It localises to the membrane. Implicated in cellular adhesion. The polypeptide is Integrin beta-like protein B (sibB) (Dictyostelium discoideum (Social amoeba)).